Consider the following 469-residue polypeptide: Type II secretion system protein HxcR (469 aa).

246-253 is a binding site for ATP; the sequence is GPTGSGKT.

It belongs to the GSP E family.

The protein localises to the cytoplasm. It carries out the reaction ATP + H2O + cellular proteinSide 1 = ADP + phosphate + cellular proteinSide 2.. Its function is as follows. ATPase component of the type II secretion system required for the energy-dependent secretion of extracellular factors from the periplasm. Acts as a molecular motor to provide the energy that is required for the export of proteins. The Hxc system is involved in the secretion of low-molecular-weight alkaline phosphatase L-AP (LapA). Is probably also involved in the secretion of the phosphate-binding protein PstS. The chain is Type II secretion system protein HxcR from Pseudomonas aeruginosa (strain ATCC 15692 / DSM 22644 / CIP 104116 / JCM 14847 / LMG 12228 / 1C / PRS 101 / PAO1).